We begin with the raw amino-acid sequence, 664 residues long: Glycine--tRNA ligase beta subunit (664 aa).

The protein belongs to the class-II aminoacyl-tRNA synthetase family. In terms of assembly, tetramer of two alpha and two beta subunits.

It is found in the cytoplasm. It catalyses the reaction tRNA(Gly) + glycine + ATP = glycyl-tRNA(Gly) + AMP + diphosphate. The chain is Glycine--tRNA ligase beta subunit (glyS) from Aquifex aeolicus (strain VF5).